A 391-amino-acid chain; its full sequence is Processive diacylglycerol beta-glucosyltransferase (391 aa).

Belongs to the glycosyltransferase 28 family. UgtP subfamily.

The protein localises to the cell membrane. The catalysed reaction is a 1,2-diacyl-3-O-(beta-D-glucopyranosyl)-sn-glycerol + UDP-alpha-D-glucose = a 1,2-diacyl-3-O-(beta-D-Glc-(1-&gt;6)-beta-D-Glc)-sn-glycerol + UDP + H(+). It carries out the reaction a 1,2-diacyl-sn-glycerol + UDP-alpha-D-glucose = a 1,2-diacyl-3-O-(beta-D-glucopyranosyl)-sn-glycerol + UDP + H(+). Its pathway is glycolipid metabolism; diglucosyl-diacylglycerol biosynthesis. Its function is as follows. Processive glucosyltransferase involved in the biosynthesis of both the bilayer- and non-bilayer-forming membrane glucolipids. Is able to successively transfer two glucosyl residues to diacylglycerol (DAG), thereby catalyzing the formation of beta-monoglucosyl-DAG (3-O-(beta-D-glucopyranosyl)-1,2-diacyl-sn-glycerol) and beta-diglucosyl-DAG (3-O-(beta-D-glucopyranosyl-beta-(1-&gt;6)-D-glucopyranosyl)-1,2-diacyl-sn-glycerol). Beta-diglucosyl-DAG is the predominant glycolipid found in Bacillales and is also used as a membrane anchor for lipoteichoic acid (LTA). This Staphylococcus haemolyticus (strain JCSC1435) protein is Processive diacylglycerol beta-glucosyltransferase.